The sequence spans 567 residues: uncharacterized protein (567 aa).

This sequence belongs to the protein kinase superfamily. ADCK protein kinase family.

This is an uncharacterized protein from Synechocystis sp. (strain ATCC 27184 / PCC 6803 / Kazusa).